The primary structure comprises 1365 residues: Serine-aspartate repeat-containing protein D (1365 aa).

Positions 1–35 (MLNRENKTAITRKGMVSNRLNKFSIRKYTVGTASI) are cleaved as a signal peptide. Positions 23-34 (FSIRKYTVGTAS) match the YSIRK-G/S signaling motif motif. The ligand binding A region stretch occupies residues 36–568 (LVGTTLIFGL…NNQSGGAGQE (533 aa)). A disordered region spans residues 54-185 (ESTNKELNEA…NKKVDAKTES (132 aa)). Composition is skewed to polar residues over residues 62-71 (EATTSASDNQ) and 94-109 (EMVS…NGNK). Basic and acidic residues predominate over residues 130 to 145 (KSDEQASPKSTNEDLN). Polar residues-rich tracts occupy residues 146–155 (TKQTISNQEA) and 163–173 (NKSVVNAQPTN). Residues 174 to 183 (EENKKVDAKT) are compositionally biased toward basic and acidic residues. CNA-B domains follow at residues 569 to 680 (VYKI…IYKP), 681 to 791 (KYNL…YKTP), 792 to 901 (KYNL…FYKP), 902 to 1012 (TYNL…YKTP), and 1013 to 1123 (KYSL…EEDT). Disordered regions lie at residues 857–884 (ETPS…STTG), 972–991 (YTPT…NGLT), and 1078–1341 (EKPA…SNNA). Composition is skewed to polar residues over residues 860 to 869 (SGYTPTQVGS) and 972 to 981 (YTPTSVTSGN). Acidic residues-rich tracts occupy residues 1091-1101 (TEDDKDADGGE) and 1118-1304 (YFEE…DSDS). The LPXTG sorting signal motif lies at 1328–1332 (LPETG). Thr-1331 carries the post-translational modification Pentaglycyl murein peptidoglycan amidated threonine. Positions 1332–1365 (GNENSGSNNATLFGGLFAALGSLLLFGRRKKQNK) are cleaved as a propeptide — removed by sortase.

It belongs to the serine-aspartate repeat-containing protein (SDr) family. As to quaternary structure, interacts with host DSG1; this interaction increases S.aureus adherence to keratinocytes.

It localises to the secreted. Its subcellular location is the cell wall. In terms of biological role, cell surface-associated calcium-binding protein which plays an important role in adhesion and pathogenesis. Mediates interactions with components of the extracellular matrix such as host DSG1 to promote bacterial adhesion to host cells. Contributes to the resistance to killing by innate immune components such as neutrophils present in blood and thus attenuates bacterial clearance. The polypeptide is Serine-aspartate repeat-containing protein D (sdrD) (Staphylococcus aureus (strain MSSA476)).